The chain runs to 254 residues: Acetylglutamate kinase (254 aa).

Substrate contacts are provided by residues 40-41 (GG), arginine 62, and asparagine 158.

This sequence belongs to the acetylglutamate kinase family. ArgB subfamily.

Its subcellular location is the cytoplasm. It catalyses the reaction N-acetyl-L-glutamate + ATP = N-acetyl-L-glutamyl 5-phosphate + ADP. It functions in the pathway amino-acid biosynthesis; L-arginine biosynthesis; N(2)-acetyl-L-ornithine from L-glutamate: step 2/4. In terms of biological role, catalyzes the ATP-dependent phosphorylation of N-acetyl-L-glutamate. This Chloroflexus aurantiacus (strain ATCC 29366 / DSM 635 / J-10-fl) protein is Acetylglutamate kinase.